Consider the following 204-residue polypeptide: Large ribosomal subunit protein bL25 (204 aa).

The tract at residues 1–23 (MSETLHLSAETRDRAGKGASRAL) is disordered.

Belongs to the bacterial ribosomal protein bL25 family. CTC subfamily. Part of the 50S ribosomal subunit; part of the 5S rRNA/L5/L18/L25 subcomplex. Contacts the 5S rRNA. Binds to the 5S rRNA independently of L5 and L18.

Its function is as follows. This is one of the proteins that binds to the 5S RNA in the ribosome where it forms part of the central protuberance. The protein is Large ribosomal subunit protein bL25 of Novosphingobium aromaticivorans (strain ATCC 700278 / DSM 12444 / CCUG 56034 / CIP 105152 / NBRC 16084 / F199).